The chain runs to 266 residues: MNKPIGVIDSGVGGLTVAKEIMRQLPNETIYYLGDIGRCPYGPRPGEQVKQYTVEIARKLMEFDIKMLVIACNTATAVALEYLQKTLSIPVIGVIEPGARTAIMTTRNQNVLVLGTEGTIKSEAYRTHIKRINPHVEVHGVACPGFVPLVEQMRYSDPTITSIVIHQTLKRWRNSESDTVILGCTHYPLLYKPIYDYFGGKKTVISSGLETAREVSALLTFSNEHASYTEHPDHRFFATGDPTHITNIIKEWLNLSVNVERISVND.

Substrate is bound by residues 9–10 and 41–42; these read DS and YG. The active-site Proton donor/acceptor is Cys-72. Position 73 to 74 (73 to 74) interacts with substrate; that stretch reads NT. Cys-184 functions as the Proton donor/acceptor in the catalytic mechanism. A substrate-binding site is contributed by 185-186; the sequence is TH.

This sequence belongs to the aspartate/glutamate racemases family.

The catalysed reaction is L-glutamate = D-glutamate. It functions in the pathway cell wall biogenesis; peptidoglycan biosynthesis. In terms of biological role, provides the (R)-glutamate required for cell wall biosynthesis. The protein is Glutamate racemase of Staphylococcus aureus (strain Mu3 / ATCC 700698).